A 174-amino-acid polypeptide reads, in one-letter code: Inactive signal peptidase IA (174 aa).

Over 1 to 7 the chain is Cytoplasmic; the sequence is MKKVVKY. The chain crosses the membrane as a helical span at residues 8–28; sequence LISLILAIIIVLFVQTFVIVG. At 29–174 the chain is on the extracellular side; sequence HVIPNNDMSP…FSKWTIQFKS (146 aa).

Belongs to the peptidase S26 family.

It localises to the cell membrane. Its function is as follows. Catalytically inactive. In Staphylococcus aureus (strain Mu50 / ATCC 700699), this protein is Inactive signal peptidase IA (spsA).